The chain runs to 399 residues: Proteasome-activating nucleotidase (399 aa).

The stretch at 19 to 60 (ITYLKRRIRQLELQVRMLEADKERLERELSRLRSEMSRLRQP) forms a coiled coil. Residues 184–189 (GCGKTL) and histidine 323 contribute to the ATP site. Residues 397 to 399 (IYG) form a docks into pockets in the proteasome alpha-ring to cause gate opening region.

This sequence belongs to the AAA ATPase family. In terms of assembly, homohexamer. The hexameric complex has a two-ring architecture resembling a top hat that caps the 20S proteasome core at one or both ends. Upon ATP-binding, the C-terminus of PAN interacts with the alpha-rings of the proteasome core by binding to the intersubunit pockets.

The protein resides in the cytoplasm. ATPase which is responsible for recognizing, binding, unfolding and translocation of substrate proteins into the archaeal 20S proteasome core particle. Is essential for opening the gate of the 20S proteasome via an interaction with its C-terminus, thereby allowing substrate entry and access to the site of proteolysis. Thus, the C-termini of the proteasomal ATPase function like a 'key in a lock' to induce gate opening and therefore regulate proteolysis. Unfolding activity requires energy from ATP hydrolysis, whereas ATP binding alone promotes ATPase-20S proteasome association which triggers gate opening, and supports translocation of unfolded substrates. The polypeptide is Proteasome-activating nucleotidase (Pyrococcus horikoshii (strain ATCC 700860 / DSM 12428 / JCM 9974 / NBRC 100139 / OT-3)).